A 638-amino-acid polypeptide reads, in one-letter code: Leucine-rich repeat-containing protein 63 (638 aa).

Disordered regions lie at residues valine 220 to alanine 241 and threonine 306 to arginine 325. 6 LRR repeats span residues alanine 389 to leucine 412, glutamine 413 to leucine 435, tyrosine 437 to leucine 458, tyrosine 460 to leucine 481, arginine 482 to leucine 504, and leucine 532 to serine 556.

This Mus musculus (Mouse) protein is Leucine-rich repeat-containing protein 63.